A 1040-amino-acid polypeptide reads, in one-letter code: Isoleucine--tRNA ligase (1040 aa).

A 'HIGH' region motif is present at residues 47 to 57; that stretch reads PYCSGSIHLGT. Residues 605 to 609 carry the 'KMSKS' region motif; it reads KMSKS. Lys-608 is a binding site for ATP.

Belongs to the class-I aminoacyl-tRNA synthetase family. IleS type 2 subfamily. In terms of assembly, monomer. Requires Zn(2+) as cofactor.

The protein resides in the cytoplasm. The enzyme catalyses tRNA(Ile) + L-isoleucine + ATP = L-isoleucyl-tRNA(Ile) + AMP + diphosphate. Its function is as follows. Catalyzes the attachment of isoleucine to tRNA(Ile). As IleRS can inadvertently accommodate and process structurally similar amino acids such as valine, to avoid such errors it has two additional distinct tRNA(Ile)-dependent editing activities. One activity is designated as 'pretransfer' editing and involves the hydrolysis of activated Val-AMP. The other activity is designated 'posttransfer' editing and involves deacylation of mischarged Val-tRNA(Ile). The protein is Isoleucine--tRNA ligase of Methanococcus aeolicus (strain ATCC BAA-1280 / DSM 17508 / OCM 812 / Nankai-3).